The primary structure comprises 352 residues: Quinolinate synthase (352 aa).

2 residues coordinate iminosuccinate: H48 and S69. C114 contributes to the [4Fe-4S] cluster binding site. Residues 140 to 142 (YAN) and S157 contribute to the iminosuccinate site. C201 is a [4Fe-4S] cluster binding site. Residues 227 to 229 (HPE) and T244 contribute to the iminosuccinate site. [4Fe-4S] cluster is bound at residue C298.

It belongs to the quinolinate synthase family. Type 1 subfamily. [4Fe-4S] cluster serves as cofactor.

It is found in the cytoplasm. The catalysed reaction is iminosuccinate + dihydroxyacetone phosphate = quinolinate + phosphate + 2 H2O + H(+). It functions in the pathway cofactor biosynthesis; NAD(+) biosynthesis; quinolinate from iminoaspartate: step 1/1. Its function is as follows. Catalyzes the condensation of iminoaspartate with dihydroxyacetone phosphate to form quinolinate. This is Quinolinate synthase from Pseudomonas syringae pv. tomato (strain ATCC BAA-871 / DC3000).